Reading from the N-terminus, the 312-residue chain is Tyrosine recombinase XerC (312 aa).

Residues proline 10–glutamate 101 enclose the Core-binding (CB) domain. The region spanning serine 122 to glutamate 306 is the Tyr recombinase domain. Residues arginine 165, lysine 190, histidine 258, arginine 261, and histidine 284 contribute to the active site. Residue tyrosine 293 is the O-(3'-phospho-DNA)-tyrosine intermediate of the active site.

This sequence belongs to the 'phage' integrase family. XerC subfamily. As to quaternary structure, forms a cyclic heterotetrameric complex composed of two molecules of XerC and two molecules of XerD.

It localises to the cytoplasm. Functionally, site-specific tyrosine recombinase, which acts by catalyzing the cutting and rejoining of the recombining DNA molecules. The XerC-XerD complex is essential to convert dimers of the bacterial chromosome into monomers to permit their segregation at cell division. It also contributes to the segregational stability of plasmids. The sequence is that of Tyrosine recombinase XerC from Mesorhizobium japonicum (strain LMG 29417 / CECT 9101 / MAFF 303099) (Mesorhizobium loti (strain MAFF 303099)).